The sequence spans 87 residues: uncharacterized protein (87 aa).

Residues 13-33 (LMIVSAVFGGIGIITTIVFVI) form a helical membrane-spanning segment. Positions 66 to 87 (EECGGSTETSSSKPKKKAKKEV) are disordered. Over residues 78 to 87 (KPKKKAKKEV) the composition is skewed to basic residues.

It is found in the membrane. This is an uncharacterized protein from Caenorhabditis elegans.